Consider the following 87-residue polypeptide: Small ribosomal subunit protein bS20 (87 aa).

Positions 1–26 (MANIKSAQKRAVQSEKRRQHNASQRS) are disordered.

This sequence belongs to the bacterial ribosomal protein bS20 family.

Functionally, binds directly to 16S ribosomal RNA. In Glaesserella parasuis serovar 5 (strain SH0165) (Haemophilus parasuis), this protein is Small ribosomal subunit protein bS20.